Here is a 229-residue protein sequence, read N- to C-terminus: Orotidine 5'-phosphate decarboxylase (229 aa).

Substrate-binding positions include aspartate 10, lysine 32, 59 to 68 (DLKFHDIPNT), threonine 119, arginine 180, glutamine 189, glycine 209, and arginine 210. Lysine 61 (proton donor) is an active-site residue.

The protein belongs to the OMP decarboxylase family. Type 1 subfamily. As to quaternary structure, homodimer.

The enzyme catalyses orotidine 5'-phosphate + H(+) = UMP + CO2. It functions in the pathway pyrimidine metabolism; UMP biosynthesis via de novo pathway; UMP from orotate: step 2/2. Catalyzes the decarboxylation of orotidine 5'-monophosphate (OMP) to uridine 5'-monophosphate (UMP). The polypeptide is Orotidine 5'-phosphate decarboxylase (Legionella pneumophila (strain Lens)).